Consider the following 439-residue polypeptide: 23S rRNA (uracil(1939)-C(5))-methyltransferase RlmD (439 aa).

The TRAM domain maps to 5–63 (RKLEHKTYKLNIESFSHEGRGIAHFEDKIIFVSDALPGELVIANRTFSCAKFEEADAKE). [4Fe-4S] cluster contacts are provided by Cys76, Cys82, Cys85, and Cys164. S-adenosyl-L-methionine contacts are provided by Gln271, Phe300, Asn305, Glu321, Asp348, and Asp370. Catalysis depends on Cys396, which acts as the Nucleophile.

Belongs to the class I-like SAM-binding methyltransferase superfamily. RNA M5U methyltransferase family. RlmD subfamily.

The enzyme catalyses uridine(1939) in 23S rRNA + S-adenosyl-L-methionine = 5-methyluridine(1939) in 23S rRNA + S-adenosyl-L-homocysteine + H(+). Its function is as follows. Catalyzes the formation of 5-methyl-uridine at position 1939 (m5U1939) in 23S rRNA. The polypeptide is 23S rRNA (uracil(1939)-C(5))-methyltransferase RlmD (Vesicomyosocius okutanii subsp. Calyptogena okutanii (strain HA)).